Here is a 1127-residue protein sequence, read N- to C-terminus: Carbamoyl phosphate synthase large chain (1127 aa).

The segment at 1–402 (MPKRTDIKSV…SLGKAMRSID (402 aa)) is carboxyphosphate synthetic domain. ATP-binding residues include arginine 129, arginine 169, glycine 175, glycine 176, glutamate 208, isoleucine 210, glutamate 215, glycine 241, valine 242, histidine 243, glutamine 285, and glutamate 299. Residues 133–328 (KKVVDEAGAE…IAKIATKLAL (196 aa)) form the ATP-grasp 1 domain. The Mg(2+) site is built by glutamine 285, glutamate 299, and asparagine 301. Residues glutamine 285, glutamate 299, and asparagine 301 each contribute to the Mn(2+) site. The interval 403–551 (KRHMGFNWDG…YYYSCYADET (149 aa)) is oligomerization domain. The interval 552–962 (ELRPREREAV…AFAKSQLAAY (411 aa)) is carbamoyl phosphate synthetic domain. The 201-residue stretch at 681–881 (GEVLKKAEMN…LAKAAARIMA (201 aa)) folds into the ATP-grasp 2 domain. The ATP site is built by arginine 717, lysine 765, leucine 767, glutamate 772, glycine 797, valine 798, histidine 799, serine 800, glutamine 840, and glutamate 852. Mg(2+) is bound by residues glutamine 840, glutamate 852, and asparagine 854. 3 residues coordinate Mn(2+): glutamine 840, glutamate 852, and asparagine 854. The interval 963-1127 (DGGLPTHGNV…QLFELERREF (165 aa)) is allosteric domain. An MGS-like domain is found at 964 to 1127 (GGLPTHGNVF…QLFELERREF (164 aa)).

Belongs to the CarB family. In terms of assembly, composed of two chains; the small (or glutamine) chain promotes the hydrolysis of glutamine to ammonia, which is used by the large (or ammonia) chain to synthesize carbamoyl phosphate. Tetramer of heterodimers (alpha,beta)4. Mg(2+) serves as cofactor. It depends on Mn(2+) as a cofactor.

The enzyme catalyses hydrogencarbonate + L-glutamine + 2 ATP + H2O = carbamoyl phosphate + L-glutamate + 2 ADP + phosphate + 2 H(+). It carries out the reaction hydrogencarbonate + NH4(+) + 2 ATP = carbamoyl phosphate + 2 ADP + phosphate + 2 H(+). It participates in amino-acid biosynthesis; L-arginine biosynthesis; carbamoyl phosphate from bicarbonate: step 1/1. The protein operates within pyrimidine metabolism; UMP biosynthesis via de novo pathway; (S)-dihydroorotate from bicarbonate: step 1/3. In terms of biological role, large subunit of the glutamine-dependent carbamoyl phosphate synthetase (CPSase). CPSase catalyzes the formation of carbamoyl phosphate from the ammonia moiety of glutamine, carbonate, and phosphate donated by ATP, constituting the first step of 2 biosynthetic pathways, one leading to arginine and/or urea and the other to pyrimidine nucleotides. The large subunit (synthetase) binds the substrates ammonia (free or transferred from glutamine from the small subunit), hydrogencarbonate and ATP and carries out an ATP-coupled ligase reaction, activating hydrogencarbonate by forming carboxy phosphate which reacts with ammonia to form carbamoyl phosphate. This Bifidobacterium longum (strain DJO10A) protein is Carbamoyl phosphate synthase large chain.